The primary structure comprises 132 residues: Fertilization-influencing membrane protein (132 aa).

A helical transmembrane segment spans residues 100–120; sequence PGLFHHILVGLLVVAFFFLLF.

As to expression, testis-specific.

The protein localises to the cell membrane. In terms of biological role, may play a role in sperm-oocyte fusion during fertilization. This is Fertilization-influencing membrane protein from Homo sapiens (Human).